We begin with the raw amino-acid sequence, 224 residues long: uncharacterized protein (224 aa).

Residues 108-137 (QLALDRAELNESIRATNENLALQYSKLQTE) are a coiled coil.

This is an uncharacterized protein from Human picobirnavirus (strain Human/Thailand/Hy005102/-) (PBV).